We begin with the raw amino-acid sequence, 580 residues long: Laccase-20 (580 aa).

A signal peptide spans 1–23; that stretch reads MVASLLCTVAVAVLAVAAVGGEA. 2 Plastocyanin-like domains span residues 31-147 and 156-310; these read VVHE…PRDG and KDVP…YTSA. N-linked (GlcNAc...) asparagine glycosylation is found at Asn-36 and Asn-42. Cu cation contacts are provided by His-81 and His-83. N-linked (GlcNAc...) asparagine glycosylation is present at Asn-115. Positions 126 and 128 each coordinate Cu cation. 5 N-linked (GlcNAc...) asparagine glycosylation sites follow: Asn-200, Asn-339, Asn-392, Asn-429, and Asn-460. Residues 419-561 form the Plastocyanin-like 3 domain; sequence DFPVRPPRPY…ATAFIVEDGP (143 aa). Cu cation is bound by residues Asn-478, His-481, His-483, His-540, Cys-541, His-542, His-546, and Met-551. The disordered stretch occupies residues 560 to 580; it reads GPTPETSLPPPPPEFKRCDAS.

Belongs to the multicopper oxidase family. Cu cation serves as cofactor.

The protein localises to the secreted. It localises to the extracellular space. Its subcellular location is the apoplast. It carries out the reaction 4 hydroquinone + O2 = 4 benzosemiquinone + 2 H2O. Functionally, lignin degradation and detoxification of lignin-derived products. The chain is Laccase-20 (LAC20) from Oryza sativa subsp. indica (Rice).